We begin with the raw amino-acid sequence, 227 residues long: Cytochrome c oxidase subunit 2 (227 aa).

Over 1–14 the chain is Mitochondrial intermembrane; the sequence is MAHAAQVGLQDATS. A helical transmembrane segment spans residues 15–45; sequence PIMEELITFHDHALMIIFLICFLVLYALFLT. Over 46-59 the chain is Mitochondrial matrix; sequence LTTKLTSTNISDAQ. Residues 60–87 traverse the membrane as a helical segment; sequence EMETIWTILPAIILVLIALPSLRILYMT. Residues 88–227 lie on the Mitochondrial intermembrane side of the membrane; the sequence is DEINDPSFTI…IFEMGPVFAL (140 aa). His-161, Cys-196, Glu-198, Cys-200, His-204, and Met-207 together coordinate Cu cation. Glu-198 is a binding site for Mg(2+).

It belongs to the cytochrome c oxidase subunit 2 family. Component of the cytochrome c oxidase (complex IV, CIV), a multisubunit enzyme composed of 14 subunits. The complex is composed of a catalytic core of 3 subunits MT-CO1, MT-CO2 and MT-CO3, encoded in the mitochondrial DNA, and 11 supernumerary subunits COX4I, COX5A, COX5B, COX6A, COX6B, COX6C, COX7A, COX7B, COX7C, COX8 and NDUFA4, which are encoded in the nuclear genome. The complex exists as a monomer or a dimer and forms supercomplexes (SCs) in the inner mitochondrial membrane with NADH-ubiquinone oxidoreductase (complex I, CI) and ubiquinol-cytochrome c oxidoreductase (cytochrome b-c1 complex, complex III, CIII), resulting in different assemblies (supercomplex SCI(1)III(2)IV(1) and megacomplex MCI(2)III(2)IV(2)). Found in a complex with TMEM177, COA6, COX18, COX20, SCO1 and SCO2. Interacts with TMEM177 in a COX20-dependent manner. Interacts with COX20. Interacts with COX16. It depends on Cu cation as a cofactor.

The protein resides in the mitochondrion inner membrane. It carries out the reaction 4 Fe(II)-[cytochrome c] + O2 + 8 H(+)(in) = 4 Fe(III)-[cytochrome c] + 2 H2O + 4 H(+)(out). Functionally, component of the cytochrome c oxidase, the last enzyme in the mitochondrial electron transport chain which drives oxidative phosphorylation. The respiratory chain contains 3 multisubunit complexes succinate dehydrogenase (complex II, CII), ubiquinol-cytochrome c oxidoreductase (cytochrome b-c1 complex, complex III, CIII) and cytochrome c oxidase (complex IV, CIV), that cooperate to transfer electrons derived from NADH and succinate to molecular oxygen, creating an electrochemical gradient over the inner membrane that drives transmembrane transport and the ATP synthase. Cytochrome c oxidase is the component of the respiratory chain that catalyzes the reduction of oxygen to water. Electrons originating from reduced cytochrome c in the intermembrane space (IMS) are transferred via the dinuclear copper A center (CU(A)) of subunit 2 and heme A of subunit 1 to the active site in subunit 1, a binuclear center (BNC) formed by heme A3 and copper B (CU(B)). The BNC reduces molecular oxygen to 2 water molecules using 4 electrons from cytochrome c in the IMS and 4 protons from the mitochondrial matrix. The sequence is that of Cytochrome c oxidase subunit 2 (MT-CO2) from Gorilla gorilla gorilla (Western lowland gorilla).